The primary structure comprises 237 residues: Carboxy-S-adenosyl-L-methionine synthase (237 aa).

S-adenosyl-L-methionine contacts are provided by residues Tyr-36, 61-63, 86-87, 112-113, Asn-127, and Arg-194; these read GAS, DN, and DI.

The protein belongs to the class I-like SAM-binding methyltransferase superfamily. Cx-SAM synthase family. Homodimer.

The catalysed reaction is prephenate + S-adenosyl-L-methionine = carboxy-S-adenosyl-L-methionine + 3-phenylpyruvate + H2O. Functionally, catalyzes the conversion of S-adenosyl-L-methionine (SAM) to carboxy-S-adenosyl-L-methionine (Cx-SAM). The protein is Carboxy-S-adenosyl-L-methionine synthase of Ruthia magnifica subsp. Calyptogena magnifica.